Consider the following 613-residue polypeptide: Dihydroxy-acid dehydratase (613 aa).

Mg(2+) is bound at residue Asp81. Position 122 (Cys122) interacts with [2Fe-2S] cluster. Positions 123 and 124 each coordinate Mg(2+). Position 124 is an N6-carboxylysine (Lys124). Cys195 is a binding site for [2Fe-2S] cluster. Residue Glu491 participates in Mg(2+) binding. The Proton acceptor role is filled by Ser517.

It belongs to the IlvD/Edd family. In terms of assembly, homodimer. The cofactor is [2Fe-2S] cluster. Mg(2+) serves as cofactor.

The catalysed reaction is (2R)-2,3-dihydroxy-3-methylbutanoate = 3-methyl-2-oxobutanoate + H2O. The enzyme catalyses (2R,3R)-2,3-dihydroxy-3-methylpentanoate = (S)-3-methyl-2-oxopentanoate + H2O. It participates in amino-acid biosynthesis; L-isoleucine biosynthesis; L-isoleucine from 2-oxobutanoate: step 3/4. Its pathway is amino-acid biosynthesis; L-valine biosynthesis; L-valine from pyruvate: step 3/4. Its function is as follows. Functions in the biosynthesis of branched-chain amino acids. Catalyzes the dehydration of (2R,3R)-2,3-dihydroxy-3-methylpentanoate (2,3-dihydroxy-3-methylvalerate) into 2-oxo-3-methylpentanoate (2-oxo-3-methylvalerate) and of (2R)-2,3-dihydroxy-3-methylbutanoate (2,3-dihydroxyisovalerate) into 2-oxo-3-methylbutanoate (2-oxoisovalerate), the penultimate precursor to L-isoleucine and L-valine, respectively. In Vibrio vulnificus (strain YJ016), this protein is Dihydroxy-acid dehydratase.